A 608-amino-acid chain; its full sequence is MPPFDSKAFLLSVTHQPGVYRMYNAEAEVIYVGKAKDLKKRLSSYFRSNIPSEKTKALVTHIAQIDVTVTHTETEALILEHNYIKQYLPKYNVLLRDDKSYPYIFISNHKHPRISIHRGTKRKKGEYFGPYPDSGAVRDSLHLIQKLFPIRQCEDSVYANRHRPCLMHQIGRCLAPCVKGIISDEDYAEQTEFIRLFLQGKDRQVIQSLVEQMEGASQALNFEKAATIRDQIQSMRRVQEQQYVSDESSDDLDVLGFTIENGLACIHLLMIRHGKILGSRSFFPKIPAKTEKEEVFSSFLTQYYLNHSQGRTIPNRVITSFEFESEGLEQALTELSGRKVLFQLNPKGMKGRYLKLADTNALSALTSKANHKLTVYQRFKQLEEALSLASIQRMECFDISHTMGEKTVASCVVFNQEGPVKSEYRRYNITGITGGDDYAAMAQVLERRYSKQLDIDKIPDIVFIDGGKGQLNRAYDVIRQHWGDWPKRPLLLGIAKGVTRKHGLETLVKITGEEFSMPSDSPALHLIQHIRDESHNHAISGHRAQRAKVRKTSTLQHIEGVGPKRRQALLQYLGGLQELKKASVEEISKVPGISRSLAEKIQDALKQG.

Residues 15–93 (HQPGVYRMYN…IKQYLPKYNV (79 aa)) form the GIY-YIG domain. Residues 203 to 238 (RQVIQSLVEQMEGASQALNFEKAATIRDQIQSMRRV) enclose the UVR domain.

Belongs to the UvrC family. In terms of assembly, interacts with UvrB in an incision complex.

Its subcellular location is the cytoplasm. In terms of biological role, the UvrABC repair system catalyzes the recognition and processing of DNA lesions. UvrC both incises the 5' and 3' sides of the lesion. The N-terminal half is responsible for the 3' incision and the C-terminal half is responsible for the 5' incision. This Aliivibrio salmonicida (strain LFI1238) (Vibrio salmonicida (strain LFI1238)) protein is UvrABC system protein C.